The chain runs to 191 residues: Putative manganese efflux pump MntP (191 aa).

The next 6 membrane-spanning stretches (helical) occupy residues 3–23, 37–57, 65–85, 107–129, 144–164, and 169–189; these read PISILLIGFAMSTDAFAAAIG, LRAGIIFGVIEAITPIIGWLL, VEAFDHWIAFGLLGALGIHMI, WKLALTGFATSIDAMAVGIGLAF, CTLTMVTAGIMFGRVLGSMVG, and IIGGVILVIIGATILYEHLHG.

The protein belongs to the MntP (TC 9.B.29) family.

It localises to the cell inner membrane. In terms of biological role, probably functions as a manganese efflux pump. The chain is Putative manganese efflux pump MntP from Stenotrophomonas maltophilia (strain K279a).